We begin with the raw amino-acid sequence, 211 residues long: tRNA (guanine-N(7)-)-methyltransferase (211 aa).

Positions 37, 62, 89, and 112 each coordinate S-adenosyl-L-methionine. The active site involves Asp-112. The substrate site is built by Lys-116 and Asp-148.

This sequence belongs to the class I-like SAM-binding methyltransferase superfamily. TrmB family.

It carries out the reaction guanosine(46) in tRNA + S-adenosyl-L-methionine = N(7)-methylguanosine(46) in tRNA + S-adenosyl-L-homocysteine. It functions in the pathway tRNA modification; N(7)-methylguanine-tRNA biosynthesis. In terms of biological role, catalyzes the formation of N(7)-methylguanine at position 46 (m7G46) in tRNA. This chain is tRNA (guanine-N(7)-)-methyltransferase, found in Geobacter metallireducens (strain ATCC 53774 / DSM 7210 / GS-15).